Reading from the N-terminus, the 263-residue chain is Putative TATA-binding protein pB263R (263 aa).

It belongs to the asfivirus B263R family.

Putative TATA-binding protein. The sequence is that of Putative TATA-binding protein pB263R from Ornithodoros (relapsing fever ticks).